The primary structure comprises 316 residues: Small ribosomal subunit biogenesis GTPase RsgA (316 aa).

The tract at residues 1–20 (MSKLSHQQQRRIHNHRQNKL) is disordered. The span at 8–18 (QQRRIHNHRQN) shows a compositional bias: basic residues. The CP-type G domain occupies 92–251 (AGKLKPVASN…IIDTPGVRGF (160 aa)). Residues 139–142 (NKSD) and 193–201 (GQSGVGKSS) contribute to the GTP site. Zn(2+) is bound by residues Cys275, Cys280, His282, and Cys288.

The protein belongs to the TRAFAC class YlqF/YawG GTPase family. RsgA subfamily. Monomer. Associates with 30S ribosomal subunit, binds 16S rRNA. The cofactor is Zn(2+).

Its subcellular location is the cytoplasm. Its function is as follows. One of several proteins that assist in the late maturation steps of the functional core of the 30S ribosomal subunit. Helps release RbfA from mature subunits. May play a role in the assembly of ribosomal proteins into the subunit. Circularly permuted GTPase that catalyzes slow GTP hydrolysis, GTPase activity is stimulated by the 30S ribosomal subunit. This is Small ribosomal subunit biogenesis GTPase RsgA from Dichelobacter nodosus (strain VCS1703A).